A 1098-amino-acid chain; its full sequence is Beta-alanine-activating enzyme (1098 aa).

ATP is bound by residues 198–206, aspartate 428, arginine 442, and lysine 527; that span reads TSGTTGIPK. Positions 553–630 constitute a Carrier domain; sequence EDLWEKLQYL…EIYNHILQTV (78 aa). Position 589 is an O-(pantetheine 4'-phosphoryl)serine (serine 589). Phosphoserine occurs at positions 649 and 724.

The protein belongs to the ATP-dependent AMP-binding enzyme family. Ubiquitously expressed in adult tissues.

In terms of biological role, covalently binds beta-alanine in an ATP-dependent manner to form a thioester bond with its phosphopantetheine group and transfers it to an, as yet, unknown acceptor. May be required for a post-translational protein modification or for post-transcriptional modification of an RNA. This chain is Beta-alanine-activating enzyme (AASDH), found in Homo sapiens (Human).